The primary structure comprises 111 residues: Putative ciliary rootlet coiled-coil protein-like 1 protein (111 aa).

Residues 21-86 adopt a coiled-coil conformation; it reads MELELSVTKL…RQAEQEATVA (66 aa).

It belongs to the rootletin family.

This Homo sapiens (Human) protein is Putative ciliary rootlet coiled-coil protein-like 1 protein (CROCCP2).